The primary structure comprises 413 residues: Branched-chain-amino-acid aminotransferase 3, chloroplastic (413 aa).

The N-terminal 60 residues, 1–60 (MERAAILPSVNQNYLLCPSRAFSTRLHSSTRNLSPPSFASIKLQHSSSSVSSNGGISLTR), are a transit peptide targeting the chloroplast. N6-(pyridoxal phosphate)lysine is present on K259.

It belongs to the class-IV pyridoxal-phosphate-dependent aminotransferase family. It depends on pyridoxal 5'-phosphate as a cofactor. In terms of tissue distribution, expressed in the phloem cells.

The protein resides in the plastid. It localises to the chloroplast. The enzyme catalyses L-leucine + 2-oxoglutarate = 4-methyl-2-oxopentanoate + L-glutamate. It catalyses the reaction L-isoleucine + 2-oxoglutarate = (S)-3-methyl-2-oxopentanoate + L-glutamate. It carries out the reaction L-valine + 2-oxoglutarate = 3-methyl-2-oxobutanoate + L-glutamate. The catalysed reaction is a 2-oxocarboxylate + L-methionine = 4-methylsulfanyl-2-oxobutanoate + an L-alpha-amino acid. The protein operates within amino-acid biosynthesis; L-isoleucine biosynthesis; L-isoleucine from 2-oxobutanoate: step 4/4. It participates in amino-acid biosynthesis; L-leucine biosynthesis; L-leucine from 3-methyl-2-oxobutanoate: step 4/4. Its pathway is amino-acid biosynthesis; L-valine biosynthesis; L-valine from pyruvate: step 4/4. Inhibited by Ser- or Thr-derived imine. Converts 2-oxo acids to branched-chain amino acids. Acts on leucine, isoleucine and valine. Also involved in methionine chain elongation cycle of aliphatic glucosinolate formation. Catalyzes the conversion of 5-methylthiopentyl-2-oxo and 6-methylthiohexyl-2-oxo acids to their respective Met derivatives, homomethionine and dihomo-methionine, respectively. This is Branched-chain-amino-acid aminotransferase 3, chloroplastic from Arabidopsis thaliana (Mouse-ear cress).